The following is a 399-amino-acid chain: Elongation factor Tu (399 aa).

A tr-type G domain is found at 10 to 207 (KTHMNVGTIG…AVDSYFPDPV (198 aa)). The tract at residues 19–26 (GHIDHGKT) is G1. GTP is bound at residue 19 to 26 (GHIDHGKT). Residue T26 coordinates Mg(2+). The interval 60–64 (GITIN) is G2. The interval 81 to 84 (DCPG) is G3. GTP contacts are provided by residues 81 to 85 (DCPGH) and 136 to 139 (NKVD). Residues 136–139 (NKVD) form a G4 region. A G5 region spans residues 174 to 176 (SAL).

This sequence belongs to the TRAFAC class translation factor GTPase superfamily. Classic translation factor GTPase family. EF-Tu/EF-1A subfamily. In terms of assembly, monomer.

It localises to the cytoplasm. The enzyme catalyses GTP + H2O = GDP + phosphate + H(+). Its function is as follows. GTP hydrolase that promotes the GTP-dependent binding of aminoacyl-tRNA to the A-site of ribosomes during protein biosynthesis. This is Elongation factor Tu from Petrotoga mobilis (strain DSM 10674 / SJ95).